A 439-amino-acid polypeptide reads, in one-letter code: MSRAMVAIVGRPNVGKSTLFNRILKRRISIVEDIPGVTRDRIYGNAEWLNRKFILVDTGGLDPDPKDVIFSKVKLQVEAAIEAADLILFVVDAREGLVPEDEEIANMLRKTKKEVILVCNKVDSFKEMPASFYDFFKLGLGEPIPISASNGLGIGELLDEVIKRLPENDVEYEEETIKIAVIGRPNVGKSSLVNRILGEERVIVSDIPGTTRDAIDTPFTKDGRNYILIDTAGIRRKSRISESIERYSVLRALAAIERADICLLMIDATEGPTEQDTKIAGYAFENGKGIIILVNKWDIVEKDSNTYKEYTEMIREKLAFISFAPILFISAKTGQRIHKVLETVDKVWEEYNKRITTGLLNNVLNEAMLMFPPPSSKGRPIKIYYATQVGTKPPTFVIFVNEPELLHFSYVRFLENTIRQNFGFEGVPIVISTKKRGED.

EngA-type G domains are found at residues 4-169 (AMVA…PEND) and 177-352 (IKIA…EEYN). GTP contacts are provided by residues 10–17 (GRPNVGKS), 57–61 (DTGGL), 120–123 (NKVD), 183–190 (GRPNVGKS), 230–234 (DTAGI), and 295–298 (NKWD). The KH-like domain maps to 353–437 (KRITTGLLNN…PIVISTKKRG (85 aa)).

Belongs to the TRAFAC class TrmE-Era-EngA-EngB-Septin-like GTPase superfamily. EngA (Der) GTPase family. Associates with the 50S ribosomal subunit.

GTPase that plays an essential role in the late steps of ribosome biogenesis. The protein is GTPase Der of Caldanaerobacter subterraneus subsp. tengcongensis (strain DSM 15242 / JCM 11007 / NBRC 100824 / MB4) (Thermoanaerobacter tengcongensis).